The chain runs to 228 residues: Cytidylate kinase (228 aa).

Residue 11 to 19 coordinates ATP; the sequence is GPAGTGKSS.

This sequence belongs to the cytidylate kinase family. Type 1 subfamily.

The protein localises to the cytoplasm. It carries out the reaction CMP + ATP = CDP + ADP. The catalysed reaction is dCMP + ATP = dCDP + ADP. This chain is Cytidylate kinase, found in Mycolicibacterium paratuberculosis (strain ATCC BAA-968 / K-10) (Mycobacterium paratuberculosis).